The following is a 188-amino-acid chain: Elongation factor P (188 aa).

An N6-(3,6-diaminohexanoyl)-5-hydroxylysine modification is found at K34.

Belongs to the elongation factor P family. Post-translationally, is beta-lysylated on the epsilon-amino group of Lys-34 by the combined action of EpmA and EpmB, and then hydroxylated on the C5 position of the same residue by EpmC. Lysylation is critical for the stimulatory effect of EF-P on peptide-bond formation. The lysylation moiety would extend toward the peptidyltransferase center and stabilize the terminal 3-CCA end of the tRNA. The hydroxylation of the C5 position on Lys-34 would allow additional potential stabilizing hydrogen-bond interactions with the P-tRNA.

The protein localises to the cytoplasm. Its pathway is protein biosynthesis; polypeptide chain elongation. Functionally, involved in peptide bond synthesis. Alleviates ribosome stalling that occurs when 3 or more consecutive Pro residues or the sequence PPG is present in a protein, possibly by augmenting the peptidyl transferase activity of the ribosome. Modification of Lys-34 is required for alleviation. This is Elongation factor P from Shigella boydii serotype 18 (strain CDC 3083-94 / BS512).